Consider the following 283-residue polypeptide: Trafficking protein particle complex subunit 31 (283 aa).

A compositionally biased stretch (polar residues) spans M1–P16. 2 disordered regions span residues M1 to D20 and S126 to E156. Residues S126–N151 show a composition bias toward low complexity.

This sequence belongs to the TRAPP small subunits family. BET3 subfamily. Part of the multisubunit TRAPP (transport protein particle) I complex composed of BET3, BET5, TRS20, TRS23, TRS31 and TRS33. Part of the multisubunit TRAPP (transport protein particle) II complex composed of BET3, BET5, TRS20, TRS23, TRS31, TRS33, TRS65, TRS85, TRS120 and TRS130. Part of the multisubunit TRAPP (transport protein particle) III complex composed of BET3, BET5, TRS20, TRS23, TRS31, TRS33 and TRS85.

Its subcellular location is the golgi apparatus. It localises to the cis-Golgi network. The protein localises to the endoplasmic reticulum. The protein resides in the preautophagosomal structure. Component of the TRAPP I, TRAPP II and TRAPP III complexes which act as guanine nucleotide exchange factors (GEF) for YPT1. TRAPP I plays a key role in the late stages of endoplasmic reticulum to Golgi traffic. TRAPP II plays a role in intra-Golgi transport. TRAPP III plays a role in autophagosome formation. This Saccharomyces cerevisiae (strain ATCC 204508 / S288c) (Baker's yeast) protein is Trafficking protein particle complex subunit 31 (TRS31).